The following is a 200-amino-acid chain: Cytochrome c biogenesis ATP-binding export protein CcmA (200 aa).

Positions 1–199 (MRLTGRGLRC…AARELRIGGA (199 aa)) constitute an ABC transporter domain. 35 to 42 (GANGAGKT) lines the ATP pocket.

Belongs to the ABC transporter superfamily. CcmA exporter (TC 3.A.1.107) family. In terms of assembly, the complex is composed of two ATP-binding proteins (CcmA) and two transmembrane proteins (CcmB).

The protein resides in the cell inner membrane. It catalyses the reaction heme b(in) + ATP + H2O = heme b(out) + ADP + phosphate + H(+). Its function is as follows. Part of the ABC transporter complex CcmAB involved in the biogenesis of c-type cytochromes; once thought to export heme, this seems not to be the case, but its exact role is uncertain. Responsible for energy coupling to the transport system. The chain is Cytochrome c biogenesis ATP-binding export protein CcmA from Rhodopseudomonas palustris (strain BisB18).